The chain runs to 142 residues: Deoxyuridine 5'-triphosphate nucleotidohydrolase (142 aa).

Substrate-binding positions include 62-64 (RSG), Asn-75, and 79-81 (TID).

The protein belongs to the dUTPase family. The cofactor is Mg(2+).

The enzyme catalyses dUTP + H2O = dUMP + diphosphate + H(+). Its pathway is pyrimidine metabolism; dUMP biosynthesis; dUMP from dCTP (dUTP route): step 2/2. Functionally, this enzyme is involved in nucleotide metabolism: it produces dUMP, the immediate precursor of thymidine nucleotides and it decreases the intracellular concentration of dUTP so that uracil cannot be incorporated into DNA. The sequence is that of Deoxyuridine 5'-triphosphate nucleotidohydrolase from Picosynechococcus sp. (strain ATCC 27264 / PCC 7002 / PR-6) (Agmenellum quadruplicatum).